We begin with the raw amino-acid sequence, 256 residues long: 4-hydroxy-tetrahydrodipicolinate reductase (256 aa).

An NAD(+)-binding site is contributed by 8 to 13 (GATGRV). Lys-36 provides a ligand contact to NADP(+). Residues 89 to 91 (GTT) and 113 to 116 (ATNM) contribute to the NAD(+) site. The Proton donor/acceptor role is filled by His-145. His-146 lines the (S)-2,3,4,5-tetrahydrodipicolinate pocket. Lys-149 (proton donor) is an active-site residue. 155–156 (GT) provides a ligand contact to (S)-2,3,4,5-tetrahydrodipicolinate.

Belongs to the DapB family.

The protein resides in the cytoplasm. The catalysed reaction is (S)-2,3,4,5-tetrahydrodipicolinate + NAD(+) + H2O = (2S,4S)-4-hydroxy-2,3,4,5-tetrahydrodipicolinate + NADH + H(+). It catalyses the reaction (S)-2,3,4,5-tetrahydrodipicolinate + NADP(+) + H2O = (2S,4S)-4-hydroxy-2,3,4,5-tetrahydrodipicolinate + NADPH + H(+). It functions in the pathway amino-acid biosynthesis; L-lysine biosynthesis via DAP pathway; (S)-tetrahydrodipicolinate from L-aspartate: step 4/4. Functionally, catalyzes the conversion of 4-hydroxy-tetrahydrodipicolinate (HTPA) to tetrahydrodipicolinate. This is 4-hydroxy-tetrahydrodipicolinate reductase from Wolinella succinogenes (strain ATCC 29543 / DSM 1740 / CCUG 13145 / JCM 31913 / LMG 7466 / NCTC 11488 / FDC 602W) (Vibrio succinogenes).